The sequence spans 85 residues: Large ribosomal subunit protein bL27 (85 aa).

Positions 1–24 (MAHKKGVGSSRNGRDSDGQRLGCK) are disordered.

It belongs to the bacterial ribosomal protein bL27 family.

In Geotalea daltonii (strain DSM 22248 / JCM 15807 / FRC-32) (Geobacter daltonii), this protein is Large ribosomal subunit protein bL27.